A 447-amino-acid polypeptide reads, in one-letter code: tRNA-2-methylthio-N(6)-dimethylallyladenosine synthase (447 aa).

One can recognise an MTTase N-terminal domain in the interval 4–120; that stretch reads RSFFIKTYGC…INELLERSRT (117 aa). [4Fe-4S] cluster is bound by residues Cys13, Cys49, Cys83, Cys161, Cys165, and Cys168. One can recognise a Radical SAM core domain in the interval 147 to 382; sequence HEGEFRKFVT…QARQDEIGLE (236 aa). Positions 385–446 constitute a TRAM domain; that stretch reads QEYIGTTQEV…QHSLRGSIVE (62 aa).

The protein belongs to the methylthiotransferase family. MiaB subfamily. Monomer. The cofactor is [4Fe-4S] cluster.

It is found in the cytoplasm. The catalysed reaction is N(6)-dimethylallyladenosine(37) in tRNA + (sulfur carrier)-SH + AH2 + 2 S-adenosyl-L-methionine = 2-methylsulfanyl-N(6)-dimethylallyladenosine(37) in tRNA + (sulfur carrier)-H + 5'-deoxyadenosine + L-methionine + A + S-adenosyl-L-homocysteine + 2 H(+). Catalyzes the methylthiolation of N6-(dimethylallyl)adenosine (i(6)A), leading to the formation of 2-methylthio-N6-(dimethylallyl)adenosine (ms(2)i(6)A) at position 37 in tRNAs that read codons beginning with uridine. The chain is tRNA-2-methylthio-N(6)-dimethylallyladenosine synthase from Desulfotalea psychrophila (strain LSv54 / DSM 12343).